An 851-amino-acid chain; its full sequence is Putative serine/threonine-protein kinase 019R (851 aa).

5 disordered regions span residues 1–24 (MATN…RTIK), 61–91 (PRVA…RGGP), 104–160 (GGAS…KRGG), 190–216 (GLSP…ARRS), and 340–400 (SRPS…GEPR). A compositionally biased stretch (low complexity) spans 125-141 (ARRQSPAEAAEASPCPE). Basic residues predominate over residues 196–216 (SHMRKSPARRSPARRSPARRS). Residues 340-366 (SRPSGVSRTSGTSGSSGSSASSRPPNS) are compositionally biased toward low complexity. The Protein kinase domain maps to 456 to 851 (AVSDNVIGQG…GEREIESFTM (396 aa)). Residues 462-470 (IGQGSWGSV) and Lys-485 contribute to the ATP site. The active-site Proton acceptor is Asp-608.

This sequence belongs to the protein kinase superfamily. Ser/Thr protein kinase family.

The enzyme catalyses L-seryl-[protein] + ATP = O-phospho-L-seryl-[protein] + ADP + H(+). It carries out the reaction L-threonyl-[protein] + ATP = O-phospho-L-threonyl-[protein] + ADP + H(+). The protein is Putative serine/threonine-protein kinase 019R of Dryophytes versicolor (chameleon treefrog).